The primary structure comprises 159 residues: uncharacterized protein (159 aa).

The segment at 9–36 is disordered; it reads VTSGNKEKKKKRSSAGLTGHAPPAADSS.

This is an uncharacterized protein from Caenorhabditis elegans.